We begin with the raw amino-acid sequence, 86 residues long: Small ribosomal subunit protein bS16 (86 aa).

Belongs to the bacterial ribosomal protein bS16 family.

The sequence is that of Small ribosomal subunit protein bS16 from Carboxydothermus hydrogenoformans (strain ATCC BAA-161 / DSM 6008 / Z-2901).